Reading from the N-terminus, the 110-residue chain is Large ribosomal subunit protein uL22 (110 aa).

Belongs to the universal ribosomal protein uL22 family. As to quaternary structure, part of the 50S ribosomal subunit.

In terms of biological role, this protein binds specifically to 23S rRNA; its binding is stimulated by other ribosomal proteins, e.g. L4, L17, and L20. It is important during the early stages of 50S assembly. It makes multiple contacts with different domains of the 23S rRNA in the assembled 50S subunit and ribosome. Functionally, the globular domain of the protein is located near the polypeptide exit tunnel on the outside of the subunit, while an extended beta-hairpin is found that lines the wall of the exit tunnel in the center of the 70S ribosome. The sequence is that of Large ribosomal subunit protein uL22 from Janthinobacterium sp. (strain Marseille) (Minibacterium massiliensis).